The sequence spans 509 residues: MEELQGYLEIDRSRQQHFLYPLLFQEYIYALAHDHGLNGSIFYEPMENLGYDNKSSSLIAKRLITRMHQQNHLIISISVNDSKQNRFVGHNKNLYSQMVSEGFAVIVEIPFSLRLVSSLEEKEIEKSHNLRSIHSIFPFFEDKLSHLNHVSDILIPHPIHLEILVQTLRCWVQDAPSLHLLRFFLHEYGNSNSLITPKKSISFFSKENQRFFLFLYNSHVYECESVFVFLRKPFSHLRSTSFGAFLERIHFYGKTEHLVVVPRNYFQKTLWLFKDPFMHYARYQGKSILASKGTHLLMKKWKSHLVHFWQYHFYLWSQPDRIHINQLCNHSFYFLGYFSSVRLNLSVVRSEMLENSFLIDTSIKKFETLAPIIPLIGSLAKAKFCNVSGHPISKSVWANSSDSDILNRFGRIYRNLSHYHSGSSKKQILYRIKYILRLSCARTLARKHKSTVRTFLKRLGSEFLEEFLTEEEQVLSLIFPRTSFPFYRSHRERIWYLDIIRINDLANHE.

Belongs to the intron maturase 2 family. MatK subfamily.

The protein resides in the plastid. Its subcellular location is the chloroplast. In terms of biological role, usually encoded in the trnK tRNA gene intron. Probably assists in splicing its own and other chloroplast group II introns. The protein is Maturase K of Galbulimima belgraveana (Northern pigeonberry ash).